Reading from the N-terminus, the 737-residue chain is Palmitoyltransferase AKR1 (737 aa).

A disordered region spans residues 1 to 47 (MKQIDSEDSITVPNDTPEDNSASSMQPVMSNLSIEEHQSENEPIEQE). Residues 1–304 (MKQIDSEDSI…VYFKKSLHTK (304 aa)) lie on the Cytoplasmic side of the membrane. A compositionally biased stretch (polar residues) spans 9–33 (SITVPNDTPEDNSASSMQPVMSNLS). ANK repeat units follow at residues 54-84 (PLLS…DLKH), 90-119 (ERVS…DVNF), 124-153 (LNAT…DPSV), 157-190 (QGFN…DIDC), 194-223 (NGRT…SVKA), and 227-256 (GGFT…DFFQ). A run of 2 helical transmembrane segments spans residues 305–325 (LVTF…FASI) and 326–346 (HPIF…YTLK). Topologically, residues 347-364 (KYVIPAYAQRNTRQSFLK) are cytoplasmic. Residues 365 to 385 (TPFLAGVFSGSVFWASYTWLT) form a helical membrane-spanning segment. Residues 386–396 (RIMPLTLIEEP) are Lumenal-facing. The chain crosses the membrane as a helical span at residues 397–417 (ITNLLFFAGVVLLASLFVKLV). The Cytoplasmic portion of the chain corresponds to 418-493 (RSDPGLIPEE…YNDIGLRNHK (76 aa)). A DHHC domain is found at 450 to 500 (HFCISTWVRKPIRSKFSNFSRALVTRFDHFCPWIYNDIGLRNHKTFLFFIL). Catalysis depends on C480, which acts as the S-palmitoyl cysteine intermediate. The chain crosses the membrane as a helical span at residues 494–514 (TFLFFILCLETCIFVFLKLCM). The Lumenal segment spans residues 515–547 (EYFDVLEDTFEDDYDLNCGIFGEDLCAGFFFDT). The helical transmembrane segment at 548–568 (FTFLVLAWTCFQGIWVGFLTF) threads the bilayer. Topologically, residues 569 to 737 (VQLFQTAKGV…ERHYLAEEIV (169 aa)) are cytoplasmic.

Belongs to the DHHC palmitoyltransferase family. AKR/ZDHHC17 subfamily.

It is found in the early endosome membrane. Its subcellular location is the golgi apparatus membrane. It carries out the reaction L-cysteinyl-[protein] + hexadecanoyl-CoA = S-hexadecanoyl-L-cysteinyl-[protein] + CoA. Its function is as follows. Palmitoyltransferase specific for casein kinase 1. This chain is Palmitoyltransferase AKR1 (AKR1), found in Lachancea kluyveri (strain ATCC 58438 / CBS 3082 / BCRC 21498 / NBRC 1685 / JCM 7257 / NCYC 543 / NRRL Y-12651) (Yeast).